Consider the following 511-residue polypeptide: Zinc finger CCCH-type with G patch domain-containing protein (511 aa).

The segment at 157–180 (PCSYYLEGECRFDEARCRYSHGAL) adopts a C3H1-type zinc-finger fold. A disordered region spans residues 254–281 (DQEDELTSEDSSSVNDGSSDEEESDMDD). Positions 271–281 (SSDEEESDMDD) are enriched in acidic residues. A G-patch domain is found at 311-357 (TRGIGSKLMEKMGYIHGTGLGSDGRGIVTPVSAQILPKGRSLDACME). Disordered regions lie at residues 409 to 433 (GSDN…QHST) and 478 to 511 (MHNQ…MFEF). The span at 414–425 (QQAEPEAKKAKA) shows a compositional bias: basic and acidic residues. The span at 478–493 (MHNQKQELATLQAQER) shows a compositional bias: polar residues. Residues 494 to 511 (SLSKEQQTRKSKNKMFEF) show a composition bias toward basic and acidic residues.

The protein localises to the nucleus. Functionally, transcription repressor. This is Zinc finger CCCH-type with G patch domain-containing protein from Drosophila ananassae (Fruit fly).